A 1060-amino-acid polypeptide reads, in one-letter code: Isoleucine--tRNA ligase (1060 aa).

Residues 55-65 carry the 'HIGH' region motif; that stretch reads PTANGTPGVHH. The short motif at 608 to 612 is the 'KMSKS' region element; it reads KMSKH. Lys-611 is a binding site for ATP.

The protein belongs to the class-I aminoacyl-tRNA synthetase family. IleS type 2 subfamily. Monomer. It depends on Zn(2+) as a cofactor.

It is found in the cytoplasm. The enzyme catalyses tRNA(Ile) + L-isoleucine + ATP = L-isoleucyl-tRNA(Ile) + AMP + diphosphate. Functionally, catalyzes the attachment of isoleucine to tRNA(Ile). As IleRS can inadvertently accommodate and process structurally similar amino acids such as valine, to avoid such errors it has two additional distinct tRNA(Ile)-dependent editing activities. One activity is designated as 'pretransfer' editing and involves the hydrolysis of activated Val-AMP. The other activity is designated 'posttransfer' editing and involves deacylation of mischarged Val-tRNA(Ile). This is Isoleucine--tRNA ligase from Thermobifida fusca (strain YX).